Here is a 159-residue protein sequence, read N- to C-terminus: MEHDERTHVPVELRAAGVVLLNERGDILLVQEKGIPGHPEKAGLWHIPSGAVEDGENPQDAAVREACEETGLRVRPVKFLGAYLGRFPDGVLILRHVWLAEPEPGQTLAPAFTDEIAEASFVSREDFAQLYAAGQIRMYQTKLFYADALREKGFPALPV.

Residues Met1, Arg14, and Ser49 each contribute to the Mg(2+) site. 1-6 contributes to the ATP binding site; sequence MEHDER. The 134-residue stretch at 11-144 folds into the Nudix hydrolase domain; sequence VELRAAGVVL…QIRMYQTKLF (134 aa). ATP is bound at residue 50-51; it reads GA. Positions 50-71 match the Nudix box motif; that stretch reads GAVEDGENPQDAAVREACEETG. Mg(2+) is bound by residues Glu53 and Glu65. An ATP-binding site is contributed by 87–89; it reads FPD. Arg95 contacts Mg(2+).

Belongs to the Nudix hydrolase family. Homodimer. Requires Mg(2+) as cofactor.

The enzyme catalyses 8-oxo-dGTP + H2O = 8-oxo-dGDP + phosphate + H(+). The catalysed reaction is 8-oxo-GTP + H2O = 8-oxo-GDP + phosphate + H(+). It catalyses the reaction P(1),P(4)-bis(5'-adenosyl) tetraphosphate + H2O = AMP + ATP + 2 H(+). In terms of biological role, hydrolase that can act as a nucleoside triphosphatase and a dinucleoside polyphosphate pyrophosphatase. The best substrates are 8-oxo-dGTP and 8-oxo-GTP. Other substrates include Ap4A, dGTP and GTP. May be involved in protection from damage caused by radiation. This Deinococcus radiodurans (strain ATCC 13939 / DSM 20539 / JCM 16871 / CCUG 27074 / LMG 4051 / NBRC 15346 / NCIMB 9279 / VKM B-1422 / R1) protein is Nudix hydrolase DR_1025.